A 556-amino-acid polypeptide reads, in one-letter code: Sensory neuron membrane protein 2 (556 aa).

At 1 to 6 (MIHWSL) the chain is on the cytoplasmic side. A helical transmembrane segment spans residues 7–27 (IVSALGVCVAVLGGYCGWILF). The Extracellular portion of the chain corresponds to 28–522 (PNMVHKKVEQ…KLINTLKTLN (495 aa)). N-linked (GlcNAc...) asparagine glycans are attached at residues Asn-66, Asn-274, Asn-310, and Asn-324. Intrachain disulfides connect Cys-320/Cys-388 and Cys-349/Cys-415. A helical transmembrane segment spans residues 523–543 (IVHWATLCGGIGVAVACLIYY). The Cytoplasmic portion of the chain corresponds to 544-556 (IYQRGRVVEPPVK).

It belongs to the CD36 family. As to expression, detected in the head and to a lesser extent in legs and wings.

It localises to the cell membrane. Its function is as follows. Plays an olfactory role that is not restricted to pheromone sensitivity. The polypeptide is Sensory neuron membrane protein 2 (Drosophila melanogaster (Fruit fly)).